Here is a 342-residue protein sequence, read N- to C-terminus: Phosphate acyltransferase (342 aa).

It belongs to the PlsX family. Homodimer. Probably interacts with PlsY.

It localises to the cytoplasm. The enzyme catalyses a fatty acyl-[ACP] + phosphate = an acyl phosphate + holo-[ACP]. Its pathway is lipid metabolism; phospholipid metabolism. Functionally, catalyzes the reversible formation of acyl-phosphate (acyl-PO(4)) from acyl-[acyl-carrier-protein] (acyl-ACP). This enzyme utilizes acyl-ACP as fatty acyl donor, but not acyl-CoA. This chain is Phosphate acyltransferase, found in Leuconostoc mesenteroides subsp. mesenteroides (strain ATCC 8293 / DSM 20343 / BCRC 11652 / CCM 1803 / JCM 6124 / NCDO 523 / NBRC 100496 / NCIMB 8023 / NCTC 12954 / NRRL B-1118 / 37Y).